We begin with the raw amino-acid sequence, 231 residues long: MPPRKTRSSAKSNKHSDADAHLNEGSDDVAQRKTGKRKRSAAVKGDVENKNDDDACKPSYSRWLMKSEPESRIENGVDVKFGIEDLKALPNQTGCWDGVRNYQARNFMREMKVGQQAFFYHSNCKEPGIAGLMKIVKEAYVDHTQFDKKDVHYDPSSKADNPKWHMVDVQFERMVKRFIPLAELKKYHLEHRVKGGPLKDMALFTRARLSVQPLTAEEFEFVLSLENEDPI.

The segment at 1 to 54 (MPPRKTRSSAKSNKHSDADAHLNEGSDDVAQRKTGKRKRSAAVKGDVENKNDDD) is disordered. The short motif at 4–11 (RKTRSSAK) is the Nuclear localization signal element. Basic and acidic residues-rich tracts occupy residues 14–24 (KHSDADAHLNE) and 45–54 (GDVENKNDDD).

In terms of processing, phosphorylated.

It is found in the nucleus. Its function is as follows. Specifically binds 5-hydroxymethylcytosine (5hmC), suggesting that it acts as a specific reader of 5hmC. The sequence is that of Thymocyte nuclear protein 1 (thyn1) from Danio rerio (Zebrafish).